The following is a 331-amino-acid chain: Probable protein phosphatase 2C 1 (331 aa).

The disordered stretch occupies residues 1–29 (MAASSTATRLSPPRLHAPTTPSPHLPLRR). Residues 48–292 (THLIPHPRKA…DDITVIVAQV (245 aa)) form the PPM-type phosphatase domain. D79, G80, D210, and D283 together coordinate Mn(2+). The segment at 300-331 (DEGVDEEKGQGDEQGSAVAVASSEQKEDSITT) is disordered.

This sequence belongs to the PP2C family. The cofactor is Mg(2+). It depends on Mn(2+) as a cofactor.

It catalyses the reaction O-phospho-L-seryl-[protein] + H2O = L-seryl-[protein] + phosphate. It carries out the reaction O-phospho-L-threonyl-[protein] + H2O = L-threonyl-[protein] + phosphate. This chain is Probable protein phosphatase 2C 1, found in Oryza sativa subsp. japonica (Rice).